Consider the following 206-residue polypeptide: Large ribosomal subunit protein uL4 (206 aa).

Positions 45-78 are disordered; that stretch reads QGNRAQKDREQVKHTTKKPWRQKGTGRARAGMSS. Basic residues predominate over residues 58 to 70; sequence HTTKKPWRQKGTG.

Belongs to the universal ribosomal protein uL4 family. As to quaternary structure, part of the 50S ribosomal subunit.

One of the primary rRNA binding proteins, this protein initially binds near the 5'-end of the 23S rRNA. It is important during the early stages of 50S assembly. It makes multiple contacts with different domains of the 23S rRNA in the assembled 50S subunit and ribosome. Functionally, forms part of the polypeptide exit tunnel. The sequence is that of Large ribosomal subunit protein uL4 from Burkholderia ambifaria (strain MC40-6).